We begin with the raw amino-acid sequence, 284 residues long: Hydrogenase expression/formation protein HupQ (284 aa).

Residues Met-1 to Leu-23 form a disordered region.

It belongs to the HupH/HyaF family.

In Azotobacter chroococcum mcd 1, this protein is Hydrogenase expression/formation protein HupQ (hupQ).